A 449-amino-acid chain; its full sequence is Bifunctional protein GlmU (449 aa).

The pyrophosphorylase stretch occupies residues 1–225 (MLSVAILAAG…NGELQGINNR (225 aa)). UDP-N-acetyl-alpha-D-glucosamine-binding positions include 7–10 (LAAG), lysine 21, glutamine 73, and 78–79 (GT). Aspartate 103 contacts Mg(2+). The UDP-N-acetyl-alpha-D-glucosamine site is built by glycine 140, glutamate 154, asparagine 169, and asparagine 223. Asparagine 223 contacts Mg(2+). Residues 226 to 246 (IHLSECEECIQNSIKEKHMLN) are linker. The segment at 247–449 (GVTFINKASC…NIENWKKKKS (203 aa)) is N-acetyltransferase. UDP-N-acetyl-alpha-D-glucosamine-binding residues include arginine 328 and lysine 346. The active-site Proton acceptor is the histidine 358. The UDP-N-acetyl-alpha-D-glucosamine site is built by tyrosine 361 and asparagine 372. Acetyl-CoA is bound by residues alanine 375, alanine 418, and arginine 435.

In the N-terminal section; belongs to the N-acetylglucosamine-1-phosphate uridyltransferase family. It in the C-terminal section; belongs to the transferase hexapeptide repeat family. Homotrimer. Mg(2+) serves as cofactor.

The protein resides in the cytoplasm. It carries out the reaction alpha-D-glucosamine 1-phosphate + acetyl-CoA = N-acetyl-alpha-D-glucosamine 1-phosphate + CoA + H(+). The catalysed reaction is N-acetyl-alpha-D-glucosamine 1-phosphate + UTP + H(+) = UDP-N-acetyl-alpha-D-glucosamine + diphosphate. Its pathway is nucleotide-sugar biosynthesis; UDP-N-acetyl-alpha-D-glucosamine biosynthesis; N-acetyl-alpha-D-glucosamine 1-phosphate from alpha-D-glucosamine 6-phosphate (route II): step 2/2. It functions in the pathway nucleotide-sugar biosynthesis; UDP-N-acetyl-alpha-D-glucosamine biosynthesis; UDP-N-acetyl-alpha-D-glucosamine from N-acetyl-alpha-D-glucosamine 1-phosphate: step 1/1. It participates in bacterial outer membrane biogenesis; LPS lipid A biosynthesis. Catalyzes the last two sequential reactions in the de novo biosynthetic pathway for UDP-N-acetylglucosamine (UDP-GlcNAc). The C-terminal domain catalyzes the transfer of acetyl group from acetyl coenzyme A to glucosamine-1-phosphate (GlcN-1-P) to produce N-acetylglucosamine-1-phosphate (GlcNAc-1-P), which is converted into UDP-GlcNAc by the transfer of uridine 5-monophosphate (from uridine 5-triphosphate), a reaction catalyzed by the N-terminal domain. This Prochlorococcus marinus (strain AS9601) protein is Bifunctional protein GlmU.